The primary structure comprises 86 residues: Gas vesicle protein A1 (86 aa).

Belongs to the gas vesicle GvpA family. In terms of assembly, the gas vesicle shell is 2 nm thick and consists of a single layer of this protein. It forms helical ribs nearly perpendicular to the long axis of the vesicle.

It is found in the gas vesicle shell. Its function is as follows. Gas vesicles are hollow, gas filled proteinaceous nanostructures found in some microorganisms. During planktonic growth they allow positioning of the organism at a favorable depth for light or nutrient acquisition. GvpA forms the protein shell. Functionally, it is not clear if the 2 type A proteins in this organism are functionally redundant. In terms of biological role, when the full gvp locus (gvpA1-gvpP-gvpQ-gvpA2-gvpR-gvpN-gvpF-gvpG-gvpL-gvpS-gvpK-gvpJ-gvpT-gvpU, called pNL26) is expressed in E.coli gas vesicles are made. The chain is Gas vesicle protein A1 from Priestia megaterium (Bacillus megaterium).